The chain runs to 122 residues: Large ribosomal subunit protein uL14 (122 aa).

The protein belongs to the universal ribosomal protein uL14 family. In terms of assembly, part of the 50S ribosomal subunit. Forms a cluster with proteins L3 and L19. In the 70S ribosome, L14 and L19 interact and together make contacts with the 16S rRNA in bridges B5 and B8.

In terms of biological role, binds to 23S rRNA. Forms part of two intersubunit bridges in the 70S ribosome. In Solidesulfovibrio magneticus (strain ATCC 700980 / DSM 13731 / RS-1) (Desulfovibrio magneticus), this protein is Large ribosomal subunit protein uL14.